The chain runs to 319 residues: Olfactory receptor 8K1 (319 aa).

Residues 1–31 (MNHVVKHNHTAVTKVTEFILMGITDNPGLQA) lie on the Extracellular side of the membrane. N8 carries an N-linked (GlcNAc...) asparagine glycan. The helical transmembrane segment at 32–52 (PLFGLFLIIYLVTVIGNLGMV) threads the bilayer. The Cytoplasmic segment spans residues 53–60 (ILTYLDSK). The chain crosses the membrane as a helical span at residues 61-81 (LHTPMYFFLRHLSITDLGYST). Residues 82-105 (VIAPKMLVNFIVHKNTISYNWYAT) lie on the Extracellular side of the membrane. A helical transmembrane segment spans residues 106-126 (QLAFFEIFIISELFILSAMAY). Residues 127–145 (DRYVAICKPLLYVIIMAEK) are Cytoplasmic-facing. The helical transmembrane segment at 146 to 166 (VLWVLVIVPYLYSTFVSLFLT) threads the bilayer. The Extracellular portion of the chain corresponds to 167 to 203 (IKLFKLSFCGSNIISYFYCDCIPLMSILCSDTNELEL). A helical membrane pass occupies residues 204 to 223 (IILIFSGCNLLFSLSIVLIS). Over 224-243 (YMFILVAILRMNSRKGRYKA) the chain is Cytoplasmic. Residues 244 to 264 (FSTCSSHLTVVIMFYGTLLFI) form a helical membrane-spanning segment. Topologically, residues 265-277 (YLQPKSSHTLAID) are extracellular. The chain crosses the membrane as a helical span at residues 278–298 (KMASVFYTLLIPMLNPLIYSL). The Cytoplasmic portion of the chain corresponds to 299–319 (RNKEVKDALKRTLTNRFKIPI).

The protein belongs to the G-protein coupled receptor 1 family.

Its subcellular location is the cell membrane. Odorant receptor. This Homo sapiens (Human) protein is Olfactory receptor 8K1 (OR8K1).